The sequence spans 489 residues: Lysine--tRNA ligase (489 aa).

Mg(2+) contacts are provided by glutamate 399 and glutamate 406.

Belongs to the class-II aminoacyl-tRNA synthetase family. In terms of assembly, homodimer. The cofactor is Mg(2+).

Its subcellular location is the cytoplasm. It catalyses the reaction tRNA(Lys) + L-lysine + ATP = L-lysyl-tRNA(Lys) + AMP + diphosphate. This Malacoplasma penetrans (strain HF-2) (Mycoplasma penetrans) protein is Lysine--tRNA ligase.